Consider the following 103-residue polypeptide: Antitoxin VapB1 (103 aa).

In terms of biological role, antitoxin component of a type II toxin-antitoxin (TA) system. Upon expression in E.coli neutralizes the effect of cognate toxin VapC1, partially inhibits the RNase activity of VapC1 in vitro. The polypeptide is Antitoxin VapB1 (vapB1) (Rickettsia felis (strain ATCC VR-1525 / URRWXCal2) (Rickettsia azadi)).